A 241-amino-acid chain; its full sequence is Sugar fermentation stimulation protein homolog (241 aa).

The protein belongs to the SfsA family.

The protein is Sugar fermentation stimulation protein homolog of Halorhodospira halophila (strain DSM 244 / SL1) (Ectothiorhodospira halophila (strain DSM 244 / SL1)).